Here is a 232-residue protein sequence, read N- to C-terminus: Uracil-DNA glycosylase (232 aa).

Aspartate 64 (proton acceptor) is an active-site residue.

The protein belongs to the uracil-DNA glycosylase (UDG) superfamily. UNG family.

It localises to the cytoplasm. The enzyme catalyses Hydrolyzes single-stranded DNA or mismatched double-stranded DNA and polynucleotides, releasing free uracil.. Excises uracil residues from the DNA which can arise as a result of misincorporation of dUMP residues by DNA polymerase or due to deamination of cytosine. This is Uracil-DNA glycosylase from Shouchella clausii (strain KSM-K16) (Alkalihalobacillus clausii).